The sequence spans 120 residues: Large ribosomal subunit protein bL17 (120 aa).

Belongs to the bacterial ribosomal protein bL17 family. In terms of assembly, part of the 50S ribosomal subunit. Contacts protein L32.

The polypeptide is Large ribosomal subunit protein bL17 (Shouchella clausii (strain KSM-K16) (Alkalihalobacillus clausii)).